The primary structure comprises 189 residues: Threonylcarbamoyl-AMP synthase (189 aa).

The YrdC-like domain maps to 9 to 189 (ASAQRKLSVY…IDGETGKRLR (181 aa)).

It belongs to the SUA5 family. TsaC subfamily.

It localises to the cytoplasm. The enzyme catalyses L-threonine + hydrogencarbonate + ATP = L-threonylcarbamoyladenylate + diphosphate + H2O. In terms of biological role, required for the formation of a threonylcarbamoyl group on adenosine at position 37 (t(6)A37) in tRNAs that read codons beginning with adenine. Catalyzes the conversion of L-threonine, HCO(3)(-)/CO(2) and ATP to give threonylcarbamoyl-AMP (TC-AMP) as the acyladenylate intermediate, with the release of diphosphate. This is Threonylcarbamoyl-AMP synthase from Neisseria gonorrhoeae (strain ATCC 700825 / FA 1090).